The chain runs to 671 residues: UvrABC system protein B (671 aa).

Positions 31–414 (DGFEQGEKAQ…ELNQTDHKVE (384 aa)) constitute a Helicase ATP-binding domain. 44 to 51 (GATGTGKT) contacts ATP. Positions 97-120 (YYDYYQPEAYVPQSDTYIEKDSSI) match the Beta-hairpin motif. Residues 435–601 (QIDDLVGEVN…TIVKPIRDVI (167 aa)) enclose the Helicase C-terminal domain. Residues 630–665 (QNMIKTLTAQMQEAAKKLDFEEAANLRDAIMDLKKQ) enclose the UVR domain.

This sequence belongs to the UvrB family. In terms of assembly, forms a heterotetramer with UvrA during the search for lesions. Interacts with UvrC in an incision complex.

The protein resides in the cytoplasm. In terms of biological role, the UvrABC repair system catalyzes the recognition and processing of DNA lesions. A damage recognition complex composed of 2 UvrA and 2 UvrB subunits scans DNA for abnormalities. Upon binding of the UvrA(2)B(2) complex to a putative damaged site, the DNA wraps around one UvrB monomer. DNA wrap is dependent on ATP binding by UvrB and probably causes local melting of the DNA helix, facilitating insertion of UvrB beta-hairpin between the DNA strands. Then UvrB probes one DNA strand for the presence of a lesion. If a lesion is found the UvrA subunits dissociate and the UvrB-DNA preincision complex is formed. This complex is subsequently bound by UvrC and the second UvrB is released. If no lesion is found, the DNA wraps around the other UvrB subunit that will check the other stand for damage. This is UvrABC system protein B from Lactobacillus johnsonii (strain CNCM I-12250 / La1 / NCC 533).